The primary structure comprises 518 residues: Chromosomal replication initiator protein DnaA (518 aa).

The interval 1–72 (MTLAEFWPLC…VREELAAGRS (72 aa)) is domain I, interacts with DnaA modulators. A domain II region spans residues 72–180 (SAFVFKPGEG…DAEEARYEQT (109 aa)). The segment at 145-178 (EPRQAAGSASRPESAAVAKARTDAQRDAEEARYE) is disordered. The span at 164–177 (ARTDAQRDAEEARY) shows a compositional bias: basic and acidic residues. Residues 181-397 (NLSPDYTFDT…GAFNRVGASS (217 aa)) are domain III, AAA+ region. Gly-225, Gly-227, Lys-228, and Thr-229 together coordinate ATP. The domain IV, binds dsDNA stretch occupies residues 398–518 (RFMNRPVIDI…YEKLLILIQN (121 aa)).

It belongs to the DnaA family. As to quaternary structure, oligomerizes as a right-handed, spiral filament on DNA at oriC.

The protein localises to the cytoplasm. In terms of biological role, plays an essential role in the initiation and regulation of chromosomal replication. ATP-DnaA binds to the origin of replication (oriC) to initiate formation of the DNA replication initiation complex once per cell cycle. Binds the DnaA box (a 9 base pair repeat at the origin) and separates the double-stranded (ds)DNA. Forms a right-handed helical filament on oriC DNA; dsDNA binds to the exterior of the filament while single-stranded (ss)DNA is stabiized in the filament's interior. The ATP-DnaA-oriC complex binds and stabilizes one strand of the AT-rich DNA unwinding element (DUE), permitting loading of DNA polymerase. After initiation quickly degrades to an ADP-DnaA complex that is not apt for DNA replication. Binds acidic phospholipids. This Neisseria meningitidis serogroup A / serotype 4A (strain DSM 15465 / Z2491) protein is Chromosomal replication initiator protein DnaA.